Reading from the N-terminus, the 920-residue chain is Coatomer subunit beta'-1 (920 aa).

8 WD repeats span residues 13-52 (QRSE…MVKS), 55-94 (VTEL…KIKV), 97-136 (AHAD…LCTQ), 140-180 (GHSH…PNFT), 183-224 (AHLK…CVQT), 227-266 (GHTH…LENT), 350-392 (TCDL…GSAL), and 460-500 (RIDV…SYFD). The tract at residues 850–920 (LEQGDVLDEV…EQWVLTPPQE (71 aa)) is disordered. The segment covering 854–875 (DVLDEVGEEGEDGEEEEEEDRQ) has biased composition (acidic residues).

Belongs to the WD repeat COPB2 family. As to quaternary structure, oligomeric complex that consists of at least the alpha, beta, beta', gamma, delta, epsilon and zeta subunits.

It is found in the cytoplasm. The protein resides in the golgi apparatus membrane. Its subcellular location is the cytoplasmic vesicle. It localises to the COPI-coated vesicle membrane. In terms of biological role, the coatomer is a cytosolic protein complex that binds to dilysine motifs and reversibly associates with Golgi non-clathrin-coated vesicles, which further mediate biosynthetic protein transport from the ER, via the Golgi up to the trans Golgi network. Coatomer complex is required for budding from Golgi membranes, and is essential for the retrograde Golgi-to-ER transport of dilysine-tagged proteins. This Arabidopsis thaliana (Mouse-ear cress) protein is Coatomer subunit beta'-1.